Reading from the N-terminus, the 950-residue chain is 5'-3' exoribonuclease 2 (950 aa).

The CCHC-type zinc finger occupies 262–278; it reads PCGLCNQFGHEVKDCEG. Position 286 is an N6-acetyllysine (Lys286). Positions 408 to 508 are disordered; it reads KDDEDSFRRR…SDSEPEPEDN (101 aa). Basic residues predominate over residues 416 to 426; it reads RRQKEKRKRMK. Residue Thr439 is modified to Phosphothreonine. The segment covering 445-458 has biased composition (polar residues); it reads SRNSPGSQVASNPR. Phosphoserine is present on residues Ser448, Ser471, Ser473, Ser475, Ser482, Ser487, Ser499, Ser501, and Ser678. Residues 468 to 482 are compositionally biased toward low complexity; that stretch reads NNSSPSISPNTSFTS. An asymmetric dimethylarginine; alternate mark is found at Arg824, Arg847, and Arg851. Residues Arg824, Arg847, and Arg851 each carry the omega-N-methylarginine; alternate modification. Asymmetric dimethylarginine is present on Arg880. Arg883 is modified (asymmetric dimethylarginine; alternate). Arg883 is subject to Omega-N-methylarginine; alternate. Arg895 carries the omega-N-methylarginine modification. The disordered stretch occupies residues 911 to 950; the sequence is MLAGPGGYPPRRDDRGGRQGYPREGRKYPLPPPSGRYNWN. Basic and acidic residues predominate over residues 920-937; it reads PRRDDRGGRQGYPREGRK. Residue Arg946 is modified to Asymmetric dimethylarginine; alternate. Arg946 carries the post-translational modification Omega-N-methylarginine; alternate.

The protein belongs to the 5'-3' exonuclease family. XRN2/RAT1 subfamily. As to quaternary structure, interacts with POLR2A and SMN1/SMN2. Interacts with CDKN2AIP and NKRF. Interacts with CDKN2AIPNL; the interaction is direct. Interacts with TRIM71 (via NHL repeats) in an RNA-dependent manner. Interacts with DHX34; the interaction is RNA-independent. Expressed in the spleen, thymus, prostate, testis, ovary, small intestine, colon, peripheral blood leukocytes, heart, brain, placenta, lung, liver, skeletal muscle, kidney, and pancreas. Isoform 2 is expressed predominantly in peripheral blood leukocytes.

The protein resides in the nucleus. The protein localises to the nucleolus. Functionally, possesses 5'-&gt;3' exoribonuclease activity. May promote the termination of transcription by RNA polymerase II. During transcription termination, cleavage at the polyadenylation site liberates a 5' fragment which is subsequently processed to form the mature mRNA and a 3' fragment which remains attached to the elongating polymerase. The processive degradation of this 3' fragment by this protein may promote termination of transcription. Binds to RNA polymerase II (RNAp II) transcription termination R-loops formed by G-rich pause sites. This Homo sapiens (Human) protein is 5'-3' exoribonuclease 2 (XRN2).